The following is a 119-amino-acid chain: Ribonuclease P protein component (119 aa).

The protein belongs to the RnpA family. As to quaternary structure, consists of a catalytic RNA component (M1 or rnpB) and a protein subunit.

It catalyses the reaction Endonucleolytic cleavage of RNA, removing 5'-extranucleotides from tRNA precursor.. RNaseP catalyzes the removal of the 5'-leader sequence from pre-tRNA to produce the mature 5'-terminus. It can also cleave other RNA substrates such as 4.5S RNA. The protein component plays an auxiliary but essential role in vivo by binding to the 5'-leader sequence and broadening the substrate specificity of the ribozyme. This Aeromonas salmonicida (strain A449) protein is Ribonuclease P protein component.